The sequence spans 185 residues: Elongation factor P (185 aa).

Belongs to the elongation factor P family.

The protein localises to the cytoplasm. The protein operates within protein biosynthesis; polypeptide chain elongation. Functionally, involved in peptide bond synthesis. Stimulates efficient translation and peptide-bond synthesis on native or reconstituted 70S ribosomes in vitro. Probably functions indirectly by altering the affinity of the ribosome for aminoacyl-tRNA, thus increasing their reactivity as acceptors for peptidyl transferase. The sequence is that of Elongation factor P from Deinococcus radiodurans (strain ATCC 13939 / DSM 20539 / JCM 16871 / CCUG 27074 / LMG 4051 / NBRC 15346 / NCIMB 9279 / VKM B-1422 / R1).